Reading from the N-terminus, the 441-residue chain is 3-phosphoshikimate 1-carboxyvinyltransferase (441 aa).

3 residues coordinate 3-phosphoshikimate: K22, S23, and R27. Residue K22 participates in phosphoenolpyruvate binding. Phosphoenolpyruvate contacts are provided by G95 and R123. 3-phosphoshikimate-binding residues include S168, Q170, D321, and K348. A phosphoenolpyruvate-binding site is contributed by Q170. The active-site Proton acceptor is the D321. Residues R352 and R400 each coordinate phosphoenolpyruvate.

This sequence belongs to the EPSP synthase family. Monomer.

It localises to the cytoplasm. The enzyme catalyses 3-phosphoshikimate + phosphoenolpyruvate = 5-O-(1-carboxyvinyl)-3-phosphoshikimate + phosphate. It participates in metabolic intermediate biosynthesis; chorismate biosynthesis; chorismate from D-erythrose 4-phosphate and phosphoenolpyruvate: step 6/7. Functionally, catalyzes the transfer of the enolpyruvyl moiety of phosphoenolpyruvate (PEP) to the 5-hydroxyl of shikimate-3-phosphate (S3P) to produce enolpyruvyl shikimate-3-phosphate and inorganic phosphate. The polypeptide is 3-phosphoshikimate 1-carboxyvinyltransferase (Novosphingobium aromaticivorans (strain ATCC 700278 / DSM 12444 / CCUG 56034 / CIP 105152 / NBRC 16084 / F199)).